The sequence spans 92 residues: DNA-directed RNA polymerase subunit Rpo11 (92 aa).

The protein belongs to the archaeal Rpo11/eukaryotic RPB11/RPC19 RNA polymerase subunit family. In terms of assembly, part of the RNA polymerase complex.

It localises to the cytoplasm. It catalyses the reaction RNA(n) + a ribonucleoside 5'-triphosphate = RNA(n+1) + diphosphate. DNA-dependent RNA polymerase (RNAP) catalyzes the transcription of DNA into RNA using the four ribonucleoside triphosphates as substrates. The polypeptide is DNA-directed RNA polymerase subunit Rpo11 (Halorubrum lacusprofundi (strain ATCC 49239 / DSM 5036 / JCM 8891 / ACAM 34)).